A 77-amino-acid polypeptide reads, in one-letter code: Small ribosomal subunit protein uS17 (77 aa).

It belongs to the universal ribosomal protein uS17 family. In terms of assembly, part of the 30S ribosomal subunit.

Functionally, one of the primary rRNA binding proteins, it binds specifically to the 5'-end of 16S ribosomal RNA. The protein is Small ribosomal subunit protein uS17 of Rickettsia conorii (strain ATCC VR-613 / Malish 7).